Consider the following 382-residue polypeptide: Galactokinase (382 aa).

Substrate is bound at residue 34–37; it reads EHTD. 124–130 is an ATP binding site; it reads GAGLSSS. 2 residues coordinate Mg(2+): S130 and E162. The active-site Proton acceptor is the D174. Residue Y223 coordinates substrate.

It belongs to the GHMP kinase family. GalK subfamily.

The protein resides in the cytoplasm. The catalysed reaction is alpha-D-galactose + ATP = alpha-D-galactose 1-phosphate + ADP + H(+). The protein operates within carbohydrate metabolism; galactose metabolism. In terms of biological role, catalyzes the transfer of the gamma-phosphate of ATP to D-galactose to form alpha-D-galactose-1-phosphate (Gal-1-P). In Aeromonas hydrophila subsp. hydrophila (strain ATCC 7966 / DSM 30187 / BCRC 13018 / CCUG 14551 / JCM 1027 / KCTC 2358 / NCIMB 9240 / NCTC 8049), this protein is Galactokinase.